The primary structure comprises 370 residues: Quinolinate synthase (370 aa).

Iminosuccinate is bound by residues His-62 and Ser-83. Cys-128 serves as a coordination point for [4Fe-4S] cluster. Iminosuccinate contacts are provided by residues 154 to 156 (YAN) and Ser-171. Cys-215 is a [4Fe-4S] cluster binding site. Iminosuccinate contacts are provided by residues 241 to 243 (HPE) and Thr-258. [4Fe-4S] cluster is bound at residue Cys-312.

Belongs to the quinolinate synthase family. Type 1 subfamily. It depends on [4Fe-4S] cluster as a cofactor.

Its subcellular location is the cytoplasm. It carries out the reaction iminosuccinate + dihydroxyacetone phosphate = quinolinate + phosphate + 2 H2O + H(+). It functions in the pathway cofactor biosynthesis; NAD(+) biosynthesis; quinolinate from iminoaspartate: step 1/1. Catalyzes the condensation of iminoaspartate with dihydroxyacetone phosphate to form quinolinate. In Neisseria meningitidis serogroup C / serotype 2a (strain ATCC 700532 / DSM 15464 / FAM18), this protein is Quinolinate synthase.